The sequence spans 317 residues: Beta-ketoacyl-[acyl-carrier-protein] synthase III (317 aa).

Catalysis depends on residues Cys112 and His244. Residues 245–249 form an ACP-binding region; that stretch reads QANLR. Asn274 is an active-site residue.

It belongs to the thiolase-like superfamily. FabH family. Homodimer.

Its subcellular location is the cytoplasm. The enzyme catalyses malonyl-[ACP] + acetyl-CoA + H(+) = 3-oxobutanoyl-[ACP] + CO2 + CoA. It participates in lipid metabolism; fatty acid biosynthesis. Catalyzes the condensation reaction of fatty acid synthesis by the addition to an acyl acceptor of two carbons from malonyl-ACP. Catalyzes the first condensation reaction which initiates fatty acid synthesis and may therefore play a role in governing the total rate of fatty acid production. Possesses both acetoacetyl-ACP synthase and acetyl transacylase activities. Its substrate specificity determines the biosynthesis of branched-chain and/or straight-chain of fatty acids. This chain is Beta-ketoacyl-[acyl-carrier-protein] synthase III, found in Salmonella arizonae (strain ATCC BAA-731 / CDC346-86 / RSK2980).